A 138-amino-acid polypeptide reads, in one-letter code: Large ribosomal subunit protein bL17 (138 aa).

It belongs to the bacterial ribosomal protein bL17 family. Part of the 50S ribosomal subunit. Contacts protein L32.

The sequence is that of Large ribosomal subunit protein bL17 from Bradyrhizobium diazoefficiens (strain JCM 10833 / BCRC 13528 / IAM 13628 / NBRC 14792 / USDA 110).